A 463-amino-acid chain; its full sequence is Cysteine--tRNA ligase (463 aa).

Cysteine 33 contributes to the Zn(2+) binding site. The 'HIGH' region signature appears at 35–45; the sequence is PTVYDFAHIGN. Zn(2+) contacts are provided by cysteine 221, histidine 246, and glutamate 250. A 'KMSKS' region motif is present at residues 279-283; that stretch reads KMSKS. Lysine 282 contributes to the ATP binding site.

It belongs to the class-I aminoacyl-tRNA synthetase family. In terms of assembly, monomer. Zn(2+) is required as a cofactor.

It is found in the cytoplasm. The enzyme catalyses tRNA(Cys) + L-cysteine + ATP = L-cysteinyl-tRNA(Cys) + AMP + diphosphate. This is Cysteine--tRNA ligase from Rhizobium rhizogenes (strain K84 / ATCC BAA-868) (Agrobacterium radiobacter).